The chain runs to 723 residues: Aminodeoxychorismate synthase (723 aa).

A Glutamine amidotransferase type-1 domain is found at 2–195 (RTLLVDNYDS…RDLTERHGRT (194 aa)). The Nucleophile role is filled by Cys-82. The tract at residues 96–117 (VGRAPEPRHGRTSAVRHDGTGL) is disordered. The span at 98–114 (RAPEPRHGRTSAVRHDG) shows a compositional bias: basic and acidic residues. Catalysis depends on residues His-169 and Glu-171. Disordered regions lie at residues 192-219 (HGRT…KATT) and 693-723 (FPGR…VLPG). A PABB component region spans residues 255–723 (LDSSRPGGEL…GAPKDLVLPG (469 aa)). The span at 695-704 (GRERPGKDLD) shows a compositional bias: basic and acidic residues.

This sequence in the C-terminal section; belongs to the anthranilate synthase component I family.

It carries out the reaction chorismate + L-glutamine = 4-amino-4-deoxychorismate + L-glutamate. The protein operates within antibiotic biosynthesis; candicidin biosynthesis. Functionally, involved in candicidin biosynthesis. Catalyzes the biosynthesis of 4-amino-4-deoxychorismate (ADC) from chorismate and glutamine. The polypeptide is Aminodeoxychorismate synthase (Streptomyces griseus).